We begin with the raw amino-acid sequence, 197 residues long: Imidazoleglycerol-phosphate dehydratase (197 aa).

The protein belongs to the imidazoleglycerol-phosphate dehydratase family.

It is found in the cytoplasm. The enzyme catalyses D-erythro-1-(imidazol-4-yl)glycerol 3-phosphate = 3-(imidazol-4-yl)-2-oxopropyl phosphate + H2O. Its pathway is amino-acid biosynthesis; L-histidine biosynthesis; L-histidine from 5-phospho-alpha-D-ribose 1-diphosphate: step 6/9. The polypeptide is Imidazoleglycerol-phosphate dehydratase (Pseudomonas putida (strain W619)).